A 146-amino-acid chain; its full sequence is Large ribosomal subunit protein uL15 (146 aa).

The disordered stretch occupies residues 1–66; it reads MKLHELKPAP…LQRRMPKRGF (66 aa). Composition is skewed to gly residues over residues 21–31 and 42–52; these read QGIGSGMGKTA and SGGGVRPGFEG.

It belongs to the universal ribosomal protein uL15 family. In terms of assembly, part of the 50S ribosomal subunit.

In terms of biological role, binds to the 23S rRNA. The polypeptide is Large ribosomal subunit protein uL15 (Pelotomaculum thermopropionicum (strain DSM 13744 / JCM 10971 / SI)).